Consider the following 395-residue polypeptide: MKFFNNLFKKESKITVASGSKRVRISNSFLMFSNLYEAKKPLKYVLVYLLSIINAFLLLIFIQKTGLYSFGISSLTQGFARLVFVLLKSFDETQRLLIFNILYWLLYVFINIPLIIFSYKKIGKNFTILSTHFVVASNVFGFLISIIPGSDNLPPMLASITDTNFWKAAKDLNQSAGFVPFLWSDTSQGNVIISTFIYAAIYGFYNGISVSLLYILGGSAGGADFLTQYYARKKNRSVGSILFYVNSFILIIAILIGSFVAGSLLLQDVNNYRDSAWEVSLFFSPNLIATFFSILLTGTVVSYLFPRYNFAEIKVFTDKLEEVRKALLSDNANHSLSIQETLGGYSLLKKKMIVSVSMYVEIPHLIKIIRQIDKDCLVSITRIRGIDGHIYLRQN.

The next 7 membrane-spanning stretches (helical) occupy residues 42-62 (LKYVLVYLLSIINAFLLLIFI), 67-87 (LYSFGISSLTQGFARLVFVLL), 97-117 (LIFNILYWLLYVFINIPLIIF), 128-148 (ILSTHFVVASNVFGFLISIIP), 196-216 (FIYAAIYGFYNGISVSLLYIL), 241-261 (ILFYVNSFILIIAILIGSFVA), and 281-301 (LFFSPNLIATFFSILLTGTVV).

The protein localises to the cell membrane. This is an uncharacterized protein from Mycoplasma genitalium (strain ATCC 33530 / DSM 19775 / NCTC 10195 / G37) (Mycoplasmoides genitalium).